A 762-amino-acid polypeptide reads, in one-letter code: Acyl-homoserine lactone acylase PvdQ (762 aa).

Positions 1–23 are cleaved as a signal peptide; the sequence is MGMRTVLTGLAGMLLGSMMPVQA. A propeptide spans 194–216 (spacer peptide); it reads ALSGEQAFQVAEQRRQRFRLERG. Residue S217 is the Nucleophile of the active site.

Belongs to the peptidase S45 family. As to quaternary structure, heterodimer of an alpha subunit and a beta subunit processed from the same precursor.

The protein resides in the periplasm. It carries out the reaction an N-acyl-L-homoserine lactone + H2O = L-homoserine lactone + a carboxylate. Functionally, catalyzes the deacylation of acyl-homoserine lactone (AHL or acyl-HSL), releasing homoserine lactone (HSL) and the corresponding fatty acid. Possesses a specificity for the degradation of long-chain acyl-HSLs (side chains of 11 to 14 carbons in length). Degrades 3-oxo-C12-HSL, one of the two main AHL signal molecules of P.aeruginosa, and thereby functions as a quorum quencher, inhibiting the las quorum-sensing system. Therefore, may enable P.aeruginosa to modulate its own quorum-sensing-dependent pathogenic potential. Also appears to be required for pyoverdin biosynthesis. In Pseudomonas aeruginosa (strain ATCC 15692 / DSM 22644 / CIP 104116 / JCM 14847 / LMG 12228 / 1C / PRS 101 / PAO1), this protein is Acyl-homoserine lactone acylase PvdQ (pvdQ).